The following is a 376-amino-acid chain: D-alanine--D-alanine ligase (376 aa).

The ATP-grasp domain maps to 153-366 (KLLLAGQGLP…YPELVHRLIQ (214 aa)). 185–240 (VEALGYPVFVKPARAGSSIGITRVTSREGLAAAVAEAVSHDPKVVVEAALVGREIE) lines the ATP pocket. Asp-317, Glu-333, and Asn-335 together coordinate Mg(2+).

This sequence belongs to the D-alanine--D-alanine ligase family. Mg(2+) is required as a cofactor. The cofactor is Mn(2+).

It localises to the cytoplasm. It catalyses the reaction 2 D-alanine + ATP = D-alanyl-D-alanine + ADP + phosphate + H(+). The protein operates within cell wall biogenesis; peptidoglycan biosynthesis. Its function is as follows. Cell wall formation. The protein is D-alanine--D-alanine ligase of Kineococcus radiotolerans (strain ATCC BAA-149 / DSM 14245 / SRS30216).